Here is a 570-residue protein sequence, read N- to C-terminus: 2-succinyl-5-enolpyruvyl-6-hydroxy-3-cyclohexene-1-carboxylate synthase (570 aa).

It belongs to the TPP enzyme family. MenD subfamily. As to quaternary structure, homodimer. Mg(2+) is required as a cofactor. Requires Mn(2+) as cofactor. It depends on thiamine diphosphate as a cofactor.

It catalyses the reaction isochorismate + 2-oxoglutarate + H(+) = 5-enolpyruvoyl-6-hydroxy-2-succinyl-cyclohex-3-ene-1-carboxylate + CO2. Its pathway is quinol/quinone metabolism; 1,4-dihydroxy-2-naphthoate biosynthesis; 1,4-dihydroxy-2-naphthoate from chorismate: step 2/7. The protein operates within quinol/quinone metabolism; menaquinone biosynthesis. Its function is as follows. Catalyzes the thiamine diphosphate-dependent decarboxylation of 2-oxoglutarate and the subsequent addition of the resulting succinic semialdehyde-thiamine pyrophosphate anion to isochorismate to yield 2-succinyl-5-enolpyruvyl-6-hydroxy-3-cyclohexene-1-carboxylate (SEPHCHC). The chain is 2-succinyl-5-enolpyruvyl-6-hydroxy-3-cyclohexene-1-carboxylate synthase from Vibrio cholerae serotype O1 (strain ATCC 39541 / Classical Ogawa 395 / O395).